We begin with the raw amino-acid sequence, 1025 residues long: Leucyl-cystinyl aminopeptidase (1025 aa).

M1 is subject to N-acetylmethionine. Residues 1-109 lie on the Cytoplasmic side of the membrane; sequence METFTNDRLQ…DGTCSVPSAR (109 aa). The Dileucine internalization motif motif lies at 53 to 54; that stretch reads LL. The residue at position 70 (Y70) is a Phosphotyrosine. A Dileucine internalization motif motif is present at residues 76–77; sequence LL. Phosphoserine; by PKC/PRKCZ; in vitro is present on residues S80 and S91. The segment at 96 to 101 is tankyrase binding; the sequence is RQSPDG. Residues 110 to 131 form a helical; Signal-anchor for type II membrane protein membrane-spanning segment; it reads TLVICVFVIVVAVSVIMVIYLL. Residues 132 to 1025 are Extracellular-facing; the sequence is PRCTFTKEGC…RNLKTLTLWL (894 aa). N-linked (GlcNAc...) asparagine glycosylation is found at N145, N184, N215, N256, and N266. A substrate-binding site is contributed by E295. N368 and N374 each carry an N-linked (GlcNAc...) asparagine glycan. 428 to 432 is a binding site for substrate; sequence GAMEN. N447 carries an N-linked (GlcNAc...) asparagine glycan. H464 serves as a coordination point for Zn(2+). The active-site Proton acceptor is E465. The Zn(2+) site is built by H468 and E487. N-linked (GlcNAc...) asparagine glycosylation is found at N525, N578, N664, N682, N695, N758, N834, N850, and N989.

The protein belongs to the peptidase M1 family. Homodimer. Binds tankyrases 1 and 2. It depends on Zn(2+) as a cofactor. In terms of processing, N-glycosylated. As to expression, highly expressed in heart, brain, spleen, lung, kidney and white adipose tissue. Detected at lower levels in skeletal muscle and liver.

The protein localises to the cell membrane. The protein resides in the endomembrane system. It catalyses the reaction Release of an N-terminal amino acid, Cys-|-Xaa-, in which the half-cystine residue is involved in a disulfide loop, notably in oxytocin or vasopressin. Hydrolysis rates on a range of aminoacyl arylamides exceed that for the cystinyl derivative, however.. Its function is as follows. Release of an N-terminal amino acid, cleave before cysteine, leucine as well as other amino acids. Degrades peptide hormones such as oxytocin, vasopressin and angiotensin III, and plays a role in maintaining homeostasis during pregnancy. May be involved in the inactivation of neuronal peptides in the brain. Cleaves Met-enkephalin and dynorphin. Binds angiotensin IV and may be the angiotensin IV receptor in the brain. The polypeptide is Leucyl-cystinyl aminopeptidase (Lnpep) (Rattus norvegicus (Rat)).